We begin with the raw amino-acid sequence, 141 residues long: Large ribosomal subunit protein uL11c (141 aa).

Belongs to the universal ribosomal protein uL11 family. Part of the ribosomal stalk of the 50S ribosomal subunit. Interacts with L10 and the large rRNA to form the base of the stalk. L10 forms an elongated spine to which L12 dimers bind in a sequential fashion forming a multimeric L10(L12)X complex.

Its subcellular location is the plastid. It localises to the chloroplast. Functionally, forms part of the ribosomal stalk which helps the ribosome interact with GTP-bound translation factors. The protein is Large ribosomal subunit protein uL11c of Guillardia theta (Cryptophyte).